The following is a 414-amino-acid chain: Serine hydroxymethyltransferase (414 aa).

(6S)-5,6,7,8-tetrahydrofolate-binding positions include Leu-121 and 125-127; that span reads GHL. At Lys-229 the chain carries N6-(pyridoxal phosphate)lysine.

This sequence belongs to the SHMT family. In terms of assembly, homodimer. Pyridoxal 5'-phosphate serves as cofactor.

Its subcellular location is the cytoplasm. The enzyme catalyses (6R)-5,10-methylene-5,6,7,8-tetrahydrofolate + glycine + H2O = (6S)-5,6,7,8-tetrahydrofolate + L-serine. It participates in one-carbon metabolism; tetrahydrofolate interconversion. Its pathway is amino-acid biosynthesis; glycine biosynthesis; glycine from L-serine: step 1/1. Catalyzes the reversible interconversion of serine and glycine with tetrahydrofolate (THF) serving as the one-carbon carrier. This reaction serves as the major source of one-carbon groups required for the biosynthesis of purines, thymidylate, methionine, and other important biomolecules. Also exhibits THF-independent aldolase activity toward beta-hydroxyamino acids, producing glycine and aldehydes, via a retro-aldol mechanism. This is Serine hydroxymethyltransferase from Polynucleobacter necessarius subsp. necessarius (strain STIR1).